Here is a 167-residue protein sequence, read N- to C-terminus: Endoribonuclease YbeY (167 aa).

3 residues coordinate Zn(2+): His131, His135, and His141.

Belongs to the endoribonuclease YbeY family. Zn(2+) is required as a cofactor.

The protein localises to the cytoplasm. Its function is as follows. Single strand-specific metallo-endoribonuclease involved in late-stage 70S ribosome quality control and in maturation of the 3' terminus of the 16S rRNA. This Rickettsia felis (strain ATCC VR-1525 / URRWXCal2) (Rickettsia azadi) protein is Endoribonuclease YbeY.